The primary structure comprises 393 residues: Phosphoglycerate kinase (393 aa).

Substrate contacts are provided by residues 21-23 (DLN), arginine 36, 59-62 (HLGR), arginine 113, and arginine 146. Residues lysine 197, glutamate 319, and 345–348 (GGDT) each bind ATP.

It belongs to the phosphoglycerate kinase family. Monomer.

It localises to the cytoplasm. It carries out the reaction (2R)-3-phosphoglycerate + ATP = (2R)-3-phospho-glyceroyl phosphate + ADP. It functions in the pathway carbohydrate degradation; glycolysis; pyruvate from D-glyceraldehyde 3-phosphate: step 2/5. In Nitratidesulfovibrio vulgaris (strain DSM 19637 / Miyazaki F) (Desulfovibrio vulgaris), this protein is Phosphoglycerate kinase.